The primary structure comprises 154 residues: Egg-lysin (154 aa).

The first 18 residues, 1–18 (MKLLVLCIFAMMATLAMS), serve as a signal peptide directing secretion.

In terms of assembly, homodimer. In terms of tissue distribution, sperm.

Dissolves the egg vitelline layer nonenzymatically during fertilization. It creates a hole of about 3 mu-m in diameter through which the sperm pass. This Haliotis sorenseni (White abalone) protein is Egg-lysin.